Consider the following 223-residue polypeptide: Putative NAD(P)H nitroreductase SAUSA300_2462 (223 aa).

Belongs to the nitroreductase family. FMN is required as a cofactor.

This chain is Putative NAD(P)H nitroreductase SAUSA300_2462, found in Staphylococcus aureus (strain USA300).